A 209-amino-acid polypeptide reads, in one-letter code: Elongation factor Ts, chloroplastic (209 aa).

It belongs to the EF-Ts family.

The protein localises to the plastid. It is found in the chloroplast. In terms of biological role, associates with the EF-Tu.GDP complex and induces the exchange of GDP to GTP. It remains bound to the aminoacyl-tRNA.EF-Tu.GTP complex up to the GTP hydrolysis stage on the ribosome. The protein is Elongation factor Ts, chloroplastic (tsf) of Cyanidioschyzon merolae (strain NIES-3377 / 10D) (Unicellular red alga).